The primary structure comprises 764 residues: Subtilisin-like protease SBT3.1 (764 aa).

The N-terminal stretch at Met-1–Ser-32 is a signal peptide. Positions Gly-33–Gln-120 are cleaved as a propeptide — activation peptide. One can recognise an Inhibitor I9 domain in the interval Val-41–Lys-116. Residue Asn-76 is glycosylated (N-linked (GlcNAc...) asparagine). The Peptidase S8 domain occupies Thr-124–Thr-610. Asp-156 (charge relay system) is an active-site residue. The N-linked (GlcNAc...) asparagine glycan is linked to Asn-216. His-230 acts as the Charge relay system in catalysis. N-linked (GlcNAc...) asparagine glycosylation is found at Asn-245 and Asn-374. Catalysis depends on Ser-541, which acts as the Charge relay system. N-linked (GlcNAc...) asparagine glycans are attached at residues Asn-674, Asn-711, and Asn-747.

This sequence belongs to the peptidase S8 family.

The protein resides in the secreted. The chain is Subtilisin-like protease SBT3.1 from Arabidopsis thaliana (Mouse-ear cress).